The sequence spans 48 residues: uncharacterized protein (48 aa).

This is an uncharacterized protein from Acidianus convivator (ABV).